We begin with the raw amino-acid sequence, 525 residues long: GMP synthase [glutamine-hydrolyzing] (525 aa).

Positions 9–207 constitute a Glutamine amidotransferase type-1 domain; it reads RILILDFGSQ…VLGICGCEAL (199 aa). Cys86 (nucleophile) is an active-site residue. Residues His181 and Glu183 contribute to the active site. The region spanning 208–400 is the GMPS ATP-PPase domain; that stretch reads WTSATIIEDA…LGLPYDMLYR (193 aa). 235–241 lines the ATP pocket; sequence SGGVDSS.

As to quaternary structure, homodimer.

It catalyses the reaction XMP + L-glutamine + ATP + H2O = GMP + L-glutamate + AMP + diphosphate + 2 H(+). It functions in the pathway purine metabolism; GMP biosynthesis; GMP from XMP (L-Gln route): step 1/1. Its function is as follows. Catalyzes the synthesis of GMP from XMP. The protein is GMP synthase [glutamine-hydrolyzing] of Yersinia pseudotuberculosis serotype IB (strain PB1/+).